The following is a 309-amino-acid chain: tRNA pseudouridine synthase B (309 aa).

The active-site Nucleophile is the Asp45.

It belongs to the pseudouridine synthase TruB family. Type 1 subfamily.

It carries out the reaction uridine(55) in tRNA = pseudouridine(55) in tRNA. Functionally, responsible for synthesis of pseudouridine from uracil-55 in the psi GC loop of transfer RNAs. The protein is tRNA pseudouridine synthase B of Oleidesulfovibrio alaskensis (strain ATCC BAA-1058 / DSM 17464 / G20) (Desulfovibrio alaskensis).